We begin with the raw amino-acid sequence, 330 residues long: Cytoskeleton protein RodZ (330 aa).

At Met-1–Gly-111 the chain is on the cytoplasmic side. Positions Leu-19–Leu-71 constitute an HTH cro/C1-type domain. A DNA-binding region (H-T-H motif) is located at residues Gln-30–Asp-49. The chain crosses the membrane as a helical; Signal-anchor for type II membrane protein span at residues Trp-112–Trp-132. Residues Trp-133 to Gln-330 lie on the Periplasmic side of the membrane. Residues Met-146–Leu-166 are compositionally biased toward polar residues. Residues Met-146 to Asn-237 are disordered. 2 stretches are compositionally biased toward low complexity: residues Thr-176–Asp-202 and Thr-216–Thr-233.

Belongs to the RodZ family.

It localises to the cell inner membrane. Functionally, cytoskeletal protein that is involved in cell-shape control through regulation of the length of the long axis. The protein is Cytoskeleton protein RodZ of Klebsiella pneumoniae (strain 342).